The chain runs to 547 residues: Immunoglobulin epsilon heavy chain (547 aa).

Residue Gln1 is modified to Pyrrolidone carboxylic acid. 5 Ig-like domains span residues 1–120, 130–223, 232–329, 333–437, and 443–542; these read QVQL…TEVT, PSVF…KTFS, PTVK…KKCA, PRGV…TKTS, and PEVY…RAVS. The variable (V) domain, involved in antigen recognition stretch occupies residues 1-124; sequence QVQLVQSGAE…EGTEVTYTVS (124 aa). 6 disulfide bridges follow: Cys22/Cys96, Cys139/Cys225, Cys153/Cys207, Cys254/Cys312, Cys358/Cys418, and Cys464/Cys524. Residues 125–547 form a constant (C) domain region; that stretch reads GAWTLPSVFP…QRAVSVNPGK (423 aa). Asn145, Asn173, Asn219, Asn265, Asn371, Asn383, and Asn394 each carry an N-linked (GlcNAc...) asparagine glycan.

In terms of assembly, immunoglobulins are composed of two identical heavy chains and two identical light chains; disulfide-linked.

The protein localises to the secreted. The protein resides in the cell membrane. Immunoglobulins, also known as antibodies, are membrane-bound or secreted glycoproteins produced by B lymphocytes. In the recognition phase of humoral immunity, the membrane-bound immunoglobulins serve as receptors which, upon binding of a specific antigen, trigger the clonal expansion and differentiation of B lymphocytes into immunoglobulins-secreting plasma cells. Secreted immunoglobulins mediate the effector phase of humoral immunity, which results in the elimination of bound antigens. The antigen binding site is formed by the variable domain of one heavy chain, together with that of its associated light chain. Thus, each immunoglobulin has two antigen binding sites with remarkable affinity for a particular antigen. The variable domains are assembled by a process called V-(D)-J rearrangement and can then be subjected to somatic hypermutations which, after exposure to antigen and selection, allow affinity maturation for a particular antigen. The polypeptide is Immunoglobulin epsilon heavy chain (Homo sapiens (Human)).